A 267-amino-acid chain; its full sequence is Glutamate racemase (267 aa).

Substrate contacts are provided by residues D9 to S10 and Y41 to S42. C73 (proton donor/acceptor) is an active-site residue. N74–T75 is a binding site for substrate. C184 functions as the Proton donor/acceptor in the catalytic mechanism. A substrate-binding site is contributed by T185–H186.

This sequence belongs to the aspartate/glutamate racemases family.

It catalyses the reaction L-glutamate = D-glutamate. Its pathway is cell wall biogenesis; peptidoglycan biosynthesis. In terms of biological role, provides the (R)-glutamate required for cell wall biosynthesis. In Actinobacillus pleuropneumoniae serotype 7 (strain AP76), this protein is Glutamate racemase.